Reading from the N-terminus, the 1118-residue chain is Cytospin-A (1118 aa).

Disordered stretches follow at residues 1-50 (MKKA…AALS), 75-175 (KKSN…DNQI), 294-324 (SLSPEITPGNQSDGGGTLTSSVEGSAPGSVE), and 359-391 (SSDDALDAPSSSESEGVPSIERSRKGSSGNASE). Low complexity-rich tracts occupy residues 34 to 48 (APTGGKPVKPGAAAA), 80 to 90 (SSAAPSAPAPA), and 99 to 113 (KSSTGTSSSAKRSTS). The span at 120 to 131 (SSTRERLRERTR) shows a compositional bias: basic and acidic residues. A compositionally biased stretch (polar residues) spans 133–145 (NQSKKLPSVSQGA). Residues 158-171 (TATEGDIRMSKSKS) show a composition bias toward basic and acidic residues. Positions 168-281 (KSKSDNQISD…LNALGFSLEQ (114 aa)) form a coiled coil. The span at 294–304 (SLSPEITPGNQ) shows a compositional bias: polar residues. The span at 359–373 (SSDDALDAPSSSESE) shows a compositional bias: low complexity. Phosphoserine occurs at positions 385, 386, and 390. 2 coiled-coil regions span residues 395-450 (ACLT…MESL) and 488-808 (RYME…RGRV). A phosphoserine mark is found at Ser869, Ser882, and Ser888. The disordered stretch occupies residues 916–999 (EHLLRTSSTS…STRSRIREER (84 aa)). Basic and acidic residues predominate over residues 947–957 (RSSEEMKRDIS). The span at 972–992 (TTSPQLSLSSSPTASVTPSTR) shows a compositional bias: low complexity. The Calponin-homology (CH) domain occupies 1012–1117 (GSKRNALLKW…YVTAIYKYFE (106 aa)).

This sequence belongs to the cytospin-A family. May interact with both microtubules and actin cytoskeleton.

It localises to the cytoplasm. Its subcellular location is the cytoskeleton. The protein localises to the spindle. The protein resides in the cell junction. It is found in the gap junction. Its function is as follows. Involved in cytokinesis and spindle organization. May play a role in actin cytoskeleton organization and microtubule stabilization and hence required for proper cell adhesion and migration. The polypeptide is Cytospin-A (Specc1l) (Rattus norvegicus (Rat)).